A 419-amino-acid chain; its full sequence is Hyaluronan synthase (419 aa).

Helical transmembrane passes span 8-28 (LIVLSFICLISILIYLNMYLF), 33-53 (VGIYGVILITYLVIKLGLSFL), 318-338 (IVALWTIFEVVMFMMLIVAIG), 345-365 (AIQLDLIKLFAFLSIIFIVAL), and 376-396 (PASFLLSPLYGILHLFVLQPL).

It belongs to the NodC/HAS family. Mg(2+) serves as cofactor.

The protein localises to the cell membrane. It catalyses the reaction [hyaluronan](n) + UDP-N-acetyl-alpha-D-glucosamine = N-acetyl-beta-D-glucosaminyl-(1-&gt;4)-[hyaluronan](n) + UDP + H(+). It carries out the reaction N-acetyl-beta-D-glucosaminyl-(1-&gt;4)-[hyaluronan](n) + UDP-alpha-D-glucuronate = [hyaluronan](n+1) + UDP + H(+). It participates in glycan biosynthesis; hyaluronan biosynthesis. Its function is as follows. Glycosaminoglycan synthesis. The hyaluronic acid capsule is involved in the pathogenicity of group A Streptococci; it may be the major virulence determinant. In Streptococcus pyogenes serotype M3 (strain ATCC BAA-595 / MGAS315), this protein is Hyaluronan synthase (hasA).